Consider the following 318-residue polypeptide: Na(+)-translocating NADH-quinone reductase subunit C (318 aa).

Residues 13 to 33 (WYIILFIFVLSLVAGTLLSSV) form a helical membrane-spanning segment. The residue at position 281 (T281) is an FMN phosphoryl threonine.

The protein belongs to the NqrC family. Composed of six subunits; NqrA, NqrB, NqrC, NqrD, NqrE and NqrF. FMN is required as a cofactor.

It is found in the cell inner membrane. It catalyses the reaction a ubiquinone + n Na(+)(in) + NADH + H(+) = a ubiquinol + n Na(+)(out) + NAD(+). In terms of biological role, NQR complex catalyzes the reduction of ubiquinone-1 to ubiquinol by two successive reactions, coupled with the transport of Na(+) ions from the cytoplasm to the periplasm. NqrA to NqrE are probably involved in the second step, the conversion of ubisemiquinone to ubiquinol. This chain is Na(+)-translocating NADH-quinone reductase subunit C, found in Chlamydia muridarum (strain MoPn / Nigg).